Here is a 140-residue protein sequence, read N- to C-terminus: Putative pre-16S rRNA nuclease (140 aa).

It belongs to the YqgF nuclease family.

Its subcellular location is the cytoplasm. Functionally, could be a nuclease involved in processing of the 5'-end of pre-16S rRNA. The chain is Putative pre-16S rRNA nuclease from Mannheimia succiniciproducens (strain KCTC 0769BP / MBEL55E).